Reading from the N-terminus, the 482-residue chain is 3-isopropylmalate dehydratase large subunit (482 aa).

Cys353, Cys414, and Cys417 together coordinate [4Fe-4S] cluster.

This sequence belongs to the aconitase/IPM isomerase family. LeuC type 1 subfamily. In terms of assembly, heterodimer of LeuC and LeuD. Requires [4Fe-4S] cluster as cofactor.

The catalysed reaction is (2R,3S)-3-isopropylmalate = (2S)-2-isopropylmalate. Its pathway is amino-acid biosynthesis; L-leucine biosynthesis; L-leucine from 3-methyl-2-oxobutanoate: step 2/4. In terms of biological role, catalyzes the isomerization between 2-isopropylmalate and 3-isopropylmalate, via the formation of 2-isopropylmaleate. This Xanthomonas oryzae pv. oryzae (strain MAFF 311018) protein is 3-isopropylmalate dehydratase large subunit.